A 119-amino-acid chain; its full sequence is Large ribosomal subunit protein uL22 (119 aa).

The protein belongs to the universal ribosomal protein uL22 family. As to quaternary structure, part of the 50S ribosomal subunit.

This protein binds specifically to 23S rRNA; its binding is stimulated by other ribosomal proteins, e.g. L4, L17, and L20. It is important during the early stages of 50S assembly. It makes multiple contacts with different domains of the 23S rRNA in the assembled 50S subunit and ribosome. Functionally, the globular domain of the protein is located near the polypeptide exit tunnel on the outside of the subunit, while an extended beta-hairpin is found that lines the wall of the exit tunnel in the center of the 70S ribosome. The polypeptide is Large ribosomal subunit protein uL22 (Rickettsia peacockii (strain Rustic)).